Reading from the N-terminus, the 228-residue chain is Woronin body membrane protein wscA (228 aa).

4 helical membrane-spanning segments follow: residues 89–109 (MTLY…GILQ), 130–150 (LIVS…IAGA), 162–182 (AGFM…LAFA), and 185–205 (FLPE…IGTY).

It belongs to the peroxisomal membrane protein PXMP2/4 family. In terms of assembly, self-assembles into detergent-resistant oligomers and forms a complex with hexA assemblies.

The protein localises to the peroxisome membrane. It localises to the cell septum. In terms of biological role, woronin sorting complex protein involved in both Woronin bodies (WB) formation and inherence. Localizes to large peroxisome membranes where it self-assembles into detergent-resistant oligomers that envelop hex-1 assemblies, producing asymmetrical nascent WBs. These structures are then delivered to the cell cortex, which permits partitioning of the nascent WB and WB inheritance. The polypeptide is Woronin body membrane protein wscA (Aspergillus fumigatus (strain ATCC MYA-4609 / CBS 101355 / FGSC A1100 / Af293) (Neosartorya fumigata)).